Here is a 303-residue protein sequence, read N- to C-terminus: Acetylglutamate kinase (303 aa).

Substrate contacts are provided by residues 76 to 77 (GG), Arg98, and Asn199.

The protein belongs to the acetylglutamate kinase family. ArgB subfamily.

The protein localises to the cytoplasm. It carries out the reaction N-acetyl-L-glutamate + ATP = N-acetyl-L-glutamyl 5-phosphate + ADP. The protein operates within amino-acid biosynthesis; L-arginine biosynthesis; N(2)-acetyl-L-ornithine from L-glutamate: step 2/4. In terms of biological role, catalyzes the ATP-dependent phosphorylation of N-acetyl-L-glutamate. This is Acetylglutamate kinase from Clavibacter michiganensis subsp. michiganensis (strain NCPPB 382).